We begin with the raw amino-acid sequence, 249 residues long: 5'-nucleotidase SurE (249 aa).

Residues D8, D9, S39, and N91 each contribute to the a divalent metal cation site.

It belongs to the SurE nucleotidase family. Requires a divalent metal cation as cofactor.

The protein localises to the cytoplasm. It carries out the reaction a ribonucleoside 5'-phosphate + H2O = a ribonucleoside + phosphate. Nucleotidase that shows phosphatase activity on nucleoside 5'-monophosphates. In Stutzerimonas stutzeri (strain A1501) (Pseudomonas stutzeri), this protein is 5'-nucleotidase SurE.